A 984-amino-acid polypeptide reads, in one-letter code: Glycine dehydrogenase (decarboxylating) (984 aa).

An N6-(pyridoxal phosphate)lysine modification is found at Lys-702.

It belongs to the GcvP family. In terms of assembly, the glycine cleavage system is composed of four proteins: P, T, L and H. Pyridoxal 5'-phosphate serves as cofactor.

The catalysed reaction is N(6)-[(R)-lipoyl]-L-lysyl-[glycine-cleavage complex H protein] + glycine + H(+) = N(6)-[(R)-S(8)-aminomethyldihydrolipoyl]-L-lysyl-[glycine-cleavage complex H protein] + CO2. The glycine cleavage system catalyzes the degradation of glycine. The P protein binds the alpha-amino group of glycine through its pyridoxal phosphate cofactor; CO(2) is released and the remaining methylamine moiety is then transferred to the lipoamide cofactor of the H protein. This chain is Glycine dehydrogenase (decarboxylating), found in Xanthomonas oryzae pv. oryzae (strain MAFF 311018).